A 333-amino-acid chain; its full sequence is Adenosine deaminase (333 aa).

Positions 12 and 14 each coordinate Zn(2+). Substrate-binding residues include H14, D16, and G170. H197 provides a ligand contact to Zn(2+). Catalysis depends on E200, which acts as the Proton donor. Zn(2+) is bound at residue D278. D279 lines the substrate pocket.

Belongs to the metallo-dependent hydrolases superfamily. Adenosine and AMP deaminases family. Adenosine deaminase subfamily. Zn(2+) is required as a cofactor.

It catalyses the reaction adenosine + H2O + H(+) = inosine + NH4(+). It carries out the reaction 2'-deoxyadenosine + H2O + H(+) = 2'-deoxyinosine + NH4(+). In terms of biological role, catalyzes the hydrolytic deamination of adenosine and 2-deoxyadenosine. The protein is Adenosine deaminase of Escherichia coli O7:K1 (strain IAI39 / ExPEC).